The following is a 572-amino-acid chain: Adenine deaminase (572 aa).

The protein belongs to the metallo-dependent hydrolases superfamily. Adenine deaminase family. It depends on Mn(2+) as a cofactor.

The enzyme catalyses adenine + H2O + H(+) = hypoxanthine + NH4(+). This Clostridium perfringens (strain 13 / Type A) protein is Adenine deaminase.